Consider the following 166-residue polypeptide: Cofilin-2 (166 aa).

An N-acetylalanine modification is found at A2. The residue at position 3 (S3) is a Phosphoserine. The ADF-H domain occupies 4-153 (GVTVNDEVIK…KDRSTLGEKL (150 aa)). T6 carries the post-translational modification Phosphothreonine. The short motif at 30–34 (KKRKK) is the Nuclear localization signal element.

Belongs to the actin-binding proteins ADF family. The phosphorylation of Ser-24 may prevent recognition of the nuclear localization signal.

It localises to the nucleus matrix. It is found in the cytoplasm. The protein resides in the cytoskeleton. Functionally, controls reversibly actin polymerization and depolymerization in a pH-sensitive manner. It has the ability to bind G- and F-actin in a 1:1 ratio of cofilin to actin. It is the major component of intranuclear and cytoplasmic actin rods. The polypeptide is Cofilin-2 (CFL2) (Bos taurus (Bovine)).